The sequence spans 1013 residues: Hemoglobin-binding protein A (1013 aa).

The first 24 residues, 1–24 (MTNFKFSLLACSIAFALNASTAYA), serve as a signal peptide directing secretion. 8 repeat units span residues 26–29 (QPTN), 30–33 (QPTN), 34–37 (QPTN), 38–41 (QPTN), 42–45 (QPTN), 46–49 (QPTN), 50–53 (QPTN), and 54–57 (QPTN). An 8 X 4 AA tandem repeats of Q-P-T-N region spans residues 26–57 (QPTNQPTNQPTNQPTNQPTNQPTNQPTNQPTN). Residues 26 to 58 (QPTNQPTNQPTNQPTNQPTNQPTNQPTNQPTNQ) are compositionally biased toward low complexity. Residues 26–61 (QPTNQPTNQPTNQPTNQPTNQPTNQPTNQPTNQDSN) form a disordered region. Residues 67-74 (EQINVSGS) carry the TonB box motif. Residues 78-205 (SDSKTPPKIA…LGGSVIYKTK (128 aa)) enclose the TBDR plug domain. Positions 213–1013 (NKDYYVSYKK…NYKMSVQFEF (801 aa)) constitute a TBDR beta-barrel domain. A TonB C-terminal box motif is present at residues 996 to 1013 (NRFYAPGRNYKMSVQFEF).

The protein belongs to the TonB-dependent receptor family. Hemoglobin/haptoglobin binding protein subfamily.

Its subcellular location is the cell outer membrane. Acts as a receptor for hemoglobin of the human host and is required for heme uptake. The chain is Hemoglobin-binding protein A (hgbA) from Haemophilus influenzae.